The following is a 377-amino-acid chain: MSRLQFQLQATDGAARRGQLSFPCGTVQTPTFMPVGTYGAVKGVLPGQLCDLGAEIILGNTFHLFLRPGLEVIADHGGLHGFMRWNGPILTDSGGFQVFSLAHRRKISEQGVTFAAPTDGAQVFLGPEESMKIQKVLNSDVVMIFDECTPYPATEDVARDSMELSLRWAQRSRDAHDALDNDAALFGIIQGGVHPDLRGRSLDGLQAIGFDGYGIGGLAVGESESERNVILEYLHPRLPTDRPRYLMGVGRPEDLVESVARGVDMFDCVMPTRHARNGQYFTGFGTVKIRNACYARDVDPIEQGCGCPACVGGYTRAYLRHLDRCNEMLASMLGSLHNLWYYETLMANMRAAITAGTFFAFRRSFYLARGLDPPPLP.

Residue D92 is the Proton acceptor of the active site. Substrate-binding positions include 92–96 (DSGGF), D146, Q190, and G217. Residues 248-254 (GVGRPED) are RNA binding. D267 acts as the Nucleophile in catalysis. An RNA binding; important for wobble base 34 recognition region spans residues 272 to 276 (TRHAR). Zn(2+)-binding residues include C305, C307, C310, and H337.

Belongs to the queuine tRNA-ribosyltransferase family. In terms of assembly, homodimer. Within each dimer, one monomer is responsible for RNA recognition and catalysis, while the other monomer binds to the replacement base PreQ1. Requires Zn(2+) as cofactor.

The catalysed reaction is 7-aminomethyl-7-carbaguanine + guanosine(34) in tRNA = 7-aminomethyl-7-carbaguanosine(34) in tRNA + guanine. Its pathway is tRNA modification; tRNA-queuosine biosynthesis. In terms of biological role, catalyzes the base-exchange of a guanine (G) residue with the queuine precursor 7-aminomethyl-7-deazaguanine (PreQ1) at position 34 (anticodon wobble position) in tRNAs with GU(N) anticodons (tRNA-Asp, -Asn, -His and -Tyr). Catalysis occurs through a double-displacement mechanism. The nucleophile active site attacks the C1' of nucleotide 34 to detach the guanine base from the RNA, forming a covalent enzyme-RNA intermediate. The proton acceptor active site deprotonates the incoming PreQ1, allowing a nucleophilic attack on the C1' of the ribose to form the product. After dissociation, two additional enzymatic reactions on the tRNA convert PreQ1 to queuine (Q), resulting in the hypermodified nucleoside queuosine (7-(((4,5-cis-dihydroxy-2-cyclopenten-1-yl)amino)methyl)-7-deazaguanosine). This chain is Queuine tRNA-ribosyltransferase, found in Xylella fastidiosa (strain Temecula1 / ATCC 700964).